The primary structure comprises 410 residues: Argininosuccinate synthase (410 aa).

Residues alanine 10–serine 18 and alanine 37 each bind ATP. Residues tyrosine 90 and serine 95 each contribute to the L-citrulline site. Position 120 (glycine 120) interacts with ATP. L-aspartate-binding residues include threonine 122, asparagine 126, and aspartate 127. Asparagine 126 is an L-citrulline binding site. 5 residues coordinate L-citrulline: arginine 130, serine 182, serine 191, glutamate 267, and tyrosine 279.

The protein belongs to the argininosuccinate synthase family. Type 1 subfamily. Homotetramer.

It is found in the cytoplasm. The enzyme catalyses L-citrulline + L-aspartate + ATP = 2-(N(omega)-L-arginino)succinate + AMP + diphosphate + H(+). It participates in amino-acid biosynthesis; L-arginine biosynthesis; L-arginine from L-ornithine and carbamoyl phosphate: step 2/3. The polypeptide is Argininosuccinate synthase (Polynucleobacter necessarius subsp. necessarius (strain STIR1)).